Consider the following 306-residue polypeptide: UDP-3-O-acyl-N-acetylglucosamine deacetylase (306 aa).

Zn(2+) contacts are provided by His-79, His-238, and Asp-242. His-265 functions as the Proton donor in the catalytic mechanism.

Belongs to the LpxC family. It depends on Zn(2+) as a cofactor.

The catalysed reaction is a UDP-3-O-[(3R)-3-hydroxyacyl]-N-acetyl-alpha-D-glucosamine + H2O = a UDP-3-O-[(3R)-3-hydroxyacyl]-alpha-D-glucosamine + acetate. It participates in glycolipid biosynthesis; lipid IV(A) biosynthesis; lipid IV(A) from (3R)-3-hydroxytetradecanoyl-[acyl-carrier-protein] and UDP-N-acetyl-alpha-D-glucosamine: step 2/6. Functionally, catalyzes the hydrolysis of UDP-3-O-myristoyl-N-acetylglucosamine to form UDP-3-O-myristoylglucosamine and acetate, the committed step in lipid A biosynthesis. The sequence is that of UDP-3-O-acyl-N-acetylglucosamine deacetylase from Shewanella violacea (strain JCM 10179 / CIP 106290 / LMG 19151 / DSS12).